A 424-amino-acid polypeptide reads, in one-letter code: Serine--tRNA ligase (424 aa).

L-serine is bound at residue 230 to 232 (TAE). ATP is bound at residue 261–263 (RSE). Glu284 provides a ligand contact to L-serine. 348–351 (EISS) contacts ATP. An L-serine-binding site is contributed by Ser384.

This sequence belongs to the class-II aminoacyl-tRNA synthetase family. Type-1 seryl-tRNA synthetase subfamily. As to quaternary structure, homodimer. The tRNA molecule binds across the dimer.

The protein localises to the cytoplasm. The catalysed reaction is tRNA(Ser) + L-serine + ATP = L-seryl-tRNA(Ser) + AMP + diphosphate + H(+). It carries out the reaction tRNA(Sec) + L-serine + ATP = L-seryl-tRNA(Sec) + AMP + diphosphate + H(+). It functions in the pathway aminoacyl-tRNA biosynthesis; selenocysteinyl-tRNA(Sec) biosynthesis; L-seryl-tRNA(Sec) from L-serine and tRNA(Sec): step 1/1. Catalyzes the attachment of serine to tRNA(Ser). Is also able to aminoacylate tRNA(Sec) with serine, to form the misacylated tRNA L-seryl-tRNA(Sec), which will be further converted into selenocysteinyl-tRNA(Sec). This is Serine--tRNA ligase from Nitratidesulfovibrio vulgaris (strain ATCC 29579 / DSM 644 / CCUG 34227 / NCIMB 8303 / VKM B-1760 / Hildenborough) (Desulfovibrio vulgaris).